Consider the following 63-residue polypeptide: Large ribosomal subunit protein uL29 (63 aa).

Belongs to the universal ribosomal protein uL29 family.

The polypeptide is Large ribosomal subunit protein uL29 (Aliarcobacter butzleri (strain RM4018) (Arcobacter butzleri)).